A 953-amino-acid polypeptide reads, in one-letter code: Coatomer subunit beta (953 aa).

The residue at position 2 (T2) is an N-acetylthreonine. 6 HEAT repeats span residues H96–E131, L132–H168, S240–T276, A277–H314, R316–V353, and D396–N433. Residue K494 is modified to N6-acetyllysine.

As to quaternary structure, oligomeric complex that consists of at least the alpha, beta, beta', gamma, delta, epsilon and zeta subunits. Interacts with CAPN8. Interacts with SCYL1 and PRKCE. Interacts with COPG1. Interacts with ARF1 (myristoylated); this interaction is required for binding of COPB1 to Golgi membranes. Interacts (via trunk domain) with ARF1 (via switch I region); the interaction is direct. Interacts with KCNK2 (via N-terminus); this interaction increases the channel-mediated whole cell currents and promotes plasma membrane expression of KCNK2. Interacts with STX17. Interacts with TMEM115. Interacts with TMEM41B. Proteolytically cleaved between Ser-528 and Ser-529 by CAPN8. As to expression, predominantly expressed in the upper one-third of the oxyntic mucosa and in most regions of the pyloric mucosa. Ubiquitously expressed including platelet, liver, heart, spleen, lung and kidney.

It is found in the cytoplasm. It localises to the golgi apparatus membrane. Its subcellular location is the cytoplasmic vesicle. The protein localises to the COPI-coated vesicle membrane. The protein resides in the cell membrane. It is found in the endoplasmic reticulum-Golgi intermediate compartment. Its function is as follows. The coatomer is a cytosolic protein complex that binds to dilysine motifs and reversibly associates with Golgi non-clathrin-coated vesicles, which further mediate biosynthetic protein transport from the ER, via the Golgi up to the trans Golgi network. Coatomer complex is required for budding from Golgi membranes, and is essential for the retrograde Golgi-to-ER transport of dilysine-tagged proteins. In mammals, the coatomer can only be recruited by membranes associated to ADP-ribosylation factors (ARFs), which are small GTP-binding proteins; the complex also influences the Golgi structural integrity, as well as the processing, activity, and endocytic recycling of LDL receptors. Involved in the Golgi disassembly and reassembly processes during cell cycle. Involved in autophagy by playing a role in early endosome function. Plays a role in organellar compartmentalization of secretory compartments including endoplasmic reticulum (ER)-Golgi intermediate compartment (ERGIC), Golgi, trans-Golgi network (TGN) and recycling endosomes, and in biosynthetic transport of CAV1. Plays a functional role in facilitating the transport of kappa-type opioid receptor mRNAs into axons and enhances translation of these proteins in cortical neurons. Required for limiting lipid storage in lipid droplets. Involved in lipid homeostasis by regulating the presence of perilipin family members PLIN2 and PLIN3 at the lipid droplet surface and promoting the association of adipocyte triglyceride lipase (PNPLA2) with the lipid droplet surface to mediate lipolysis. This Mus musculus (Mouse) protein is Coatomer subunit beta (Copb1).